Reading from the N-terminus, the 82-residue chain is ATP synthase subunit c, chloroplastic (82 aa).

The next 2 helical transmembrane spans lie at 3-23 and 57-77; these read PLIA…AAIG and FAFM…LLFA.

The protein belongs to the ATPase C chain family. As to quaternary structure, F-type ATPases have 2 components, F(1) - the catalytic core - and F(0) - the membrane proton channel. F(1) has five subunits: alpha(3), beta(3), gamma(1), delta(1), epsilon(1). F(0) has four main subunits: a(1), b(1), b'(1) and c(10-14). The alpha and beta chains form an alternating ring which encloses part of the gamma chain. F(1) is attached to F(0) by a central stalk formed by the gamma and epsilon chains, while a peripheral stalk is formed by the delta, b and b' chains.

The protein localises to the plastid. It is found in the chloroplast thylakoid membrane. Functionally, f(1)F(0) ATP synthase produces ATP from ADP in the presence of a proton or sodium gradient. F-type ATPases consist of two structural domains, F(1) containing the extramembraneous catalytic core and F(0) containing the membrane proton channel, linked together by a central stalk and a peripheral stalk. During catalysis, ATP synthesis in the catalytic domain of F(1) is coupled via a rotary mechanism of the central stalk subunits to proton translocation. Key component of the F(0) channel; it plays a direct role in translocation across the membrane. A homomeric c-ring of between 10-14 subunits forms the central stalk rotor element with the F(1) delta and epsilon subunits. The chain is ATP synthase subunit c, chloroplastic from Oltmannsiellopsis viridis (Marine flagellate).